Here is a 129-residue protein sequence, read N- to C-terminus: Fluoride-specific ion channel FluC 2 (129 aa).

4 helical membrane passes run 4 to 24, 39 to 59, 65 to 85, and 100 to 120; these read LDVM…WWIG, TFLI…LFGV, YGTM…TTFS, and GGLA…AAWL. 2 residues coordinate Na(+): Gly79 and Thr82.

Belongs to the fluoride channel Fluc/FEX (TC 1.A.43) family.

Its subcellular location is the cell inner membrane. The enzyme catalyses fluoride(in) = fluoride(out). Na(+) is not transported, but it plays an essential structural role and its presence is essential for fluoride channel function. In terms of biological role, fluoride-specific ion channel. Important for reducing fluoride concentration in the cell, thus reducing its toxicity. This chain is Fluoride-specific ion channel FluC 2, found in Brucella suis biovar 1 (strain 1330).